A 352-amino-acid chain; its full sequence is uncharacterized protein (352 aa).

The protein to M.pneumoniae MPN_633 (in the N-terminal section), and M.pneumoniae MPN_634 (in the C-terminal section).

This is an uncharacterized protein from Mycoplasma pneumoniae (strain ATCC 29342 / M129 / Subtype 1) (Mycoplasmoides pneumoniae).